A 54-amino-acid polypeptide reads, in one-letter code: Small ribosomal subunit protein uS14 (54 aa).

Zn(2+) is bound by residues Cys19, Cys22, Cys37, and Cys40.

Belongs to the universal ribosomal protein uS14 family. Zinc-binding uS14 subfamily. As to quaternary structure, part of the 30S ribosomal subunit. The cofactor is Zn(2+).

Functionally, binds 16S rRNA, required for the assembly of 30S particles. The protein is Small ribosomal subunit protein uS14 of Pyrobaculum aerophilum (strain ATCC 51768 / DSM 7523 / JCM 9630 / CIP 104966 / NBRC 100827 / IM2).